A 438-amino-acid chain; its full sequence is Malic acid transport protein (438 aa).

10 consecutive transmembrane segments (helical) span residues 37-57, 65-85, 106-126, 140-160, 172-192, 205-225, 242-262, 288-308, 321-341, and 353-373; these read SWFA…SFPF, IGKI…SCML, LFIA…AIYA, ILYY…FFTI, SPAW…AGAV, VIFG…LFAV, PGMF…INIA, FMAI…MVSF, ACGW…TIEI, and FGHI…YLMV. The segment at 390–438 is disordered; sequence AHPPPKPNTGVLNPTFPPEKAPASLEKVDTHVTSTGGESDPPSSEHESV. Residues serine 413, serine 423, serine 428, serine 432, serine 433, and serine 437 each carry the phosphoserine modification.

Belongs to the tellurite-resistance/dicarboxylate transporter (TDT) family.

Its subcellular location is the membrane. Its function is as follows. Permease for malate and other C4 dicarboxylic acids. The chain is Malic acid transport protein (mae1) from Schizosaccharomyces pombe (strain 972 / ATCC 24843) (Fission yeast).